Reading from the N-terminus, the 253-residue chain is MHILVTNDDGIHHPGLAALRDGLARDHRVQVVAPDRERSAIAHAITLLTPLRAFSQTNGNGIPSWAVNGTPADCVKLGVLELLGEKPDLVVSGINPGPNVGVNLNYSGTVSAAREAALLGIPAIAVSVSNPYGTHFSDAARFMQDLVADVAERGLPKGVFLNVNLPDVPMEEIAGVRICRQGIARLEEAFHVRKDPRNQPYYWQGSETQLFGESPDEDGVALRENCIAVTPVQCDMTDYGFLNQLKEWKVEKP.

Residues Asp8, Asp9, Ser39, and Asn95 each contribute to the a divalent metal cation site.

This sequence belongs to the SurE nucleotidase family. Requires a divalent metal cation as cofactor.

It is found in the cytoplasm. It catalyses the reaction a ribonucleoside 5'-phosphate + H2O = a ribonucleoside + phosphate. Its function is as follows. Nucleotidase that shows phosphatase activity on nucleoside 5'-monophosphates. This is 5'-nucleotidase SurE from Desulfatibacillum aliphaticivorans.